Here is a 29-residue protein sequence, read N- to C-terminus: Cyclotide mden-C (29 aa).

Positions 1–29 (GKPICGETCFKGKCYTPGCTCSYPVCKKN) form a cross-link, cyclopeptide (Gly-Asn). 3 cysteine pairs are disulfide-bonded: Cys-5–Cys-19, Cys-9–Cys-21, and Cys-14–Cys-26.

The protein belongs to the cyclotide family. In terms of processing, this is a cyclic peptide.

Its function is as follows. Probably participates in a plant defense mechanism. In Melicytus dentatus (Tree violet), this protein is Cyclotide mden-C.